Consider the following 341-residue polypeptide: Cell division protein FtsQ (341 aa).

At 1-126 (MTETDEGAPV…VARGVVRGLK (126 aa)) the chain is on the cytoplasmic side. A helical membrane pass occupies residues 127–147 (TLFATVMFSIAGFGLGLALYV). The Extracellular portion of the chain corresponds to 148 to 341 (TPAMSVRNIV…VSSPDLPTVK (194 aa)). A POTRA domain is found at 151 to 219 (MSVRNIVVTG…SALRITIVER (69 aa)).

This sequence belongs to the FtsQ/DivIB family. FtsQ subfamily.

Its subcellular location is the cell membrane. Essential cell division protein. The polypeptide is Cell division protein FtsQ (Mycobacterium leprae (strain Br4923)).